The following is a 511-amino-acid chain: Apolipoprotein N-acyltransferase (511 aa).

Transmembrane regions (helical) follow at residues 7-29, 58-78, 90-110, 125-145, 163-183, and 192-212; these read PGWP…LAPF, GWWY…VSIH, LLML…AWLW, LAFA…LTGF, VPVG…ALLV, and GASL…GLYL. The region spanning 230–470 is the CN hydrolase domain; sequence IQGNIAQELK…QGILRGEVIP (241 aa). The active-site Proton acceptor is Glu-269. Residue Lys-330 is part of the active site. The active-site Nucleophile is Cys-382. Residues 482–502 traverse the membrane as a helical segment; sequence VWPLAGLAGVLLLWALLGRQL.

Belongs to the CN hydrolase family. Apolipoprotein N-acyltransferase subfamily.

The protein localises to the cell inner membrane. It carries out the reaction N-terminal S-1,2-diacyl-sn-glyceryl-L-cysteinyl-[lipoprotein] + a glycerophospholipid = N-acyl-S-1,2-diacyl-sn-glyceryl-L-cysteinyl-[lipoprotein] + a 2-acyl-sn-glycero-3-phospholipid + H(+). It participates in protein modification; lipoprotein biosynthesis (N-acyl transfer). In terms of biological role, catalyzes the phospholipid dependent N-acylation of the N-terminal cysteine of apolipoprotein, the last step in lipoprotein maturation. This chain is Apolipoprotein N-acyltransferase, found in Pseudomonas aeruginosa (strain LESB58).